A 260-amino-acid chain; its full sequence is Thiazole synthase (260 aa).

Lys96 functions as the Schiff-base intermediate with DXP in the catalytic mechanism. Residues Gly157, 184 to 185 (AG), and 206 to 207 (NT) each bind 1-deoxy-D-xylulose 5-phosphate.

This sequence belongs to the ThiG family. Homotetramer. Forms heterodimers with either ThiH or ThiS.

It localises to the cytoplasm. It carries out the reaction [ThiS sulfur-carrier protein]-C-terminal-Gly-aminoethanethioate + 2-iminoacetate + 1-deoxy-D-xylulose 5-phosphate = [ThiS sulfur-carrier protein]-C-terminal Gly-Gly + 2-[(2R,5Z)-2-carboxy-4-methylthiazol-5(2H)-ylidene]ethyl phosphate + 2 H2O + H(+). It participates in cofactor biosynthesis; thiamine diphosphate biosynthesis. In terms of biological role, catalyzes the rearrangement of 1-deoxy-D-xylulose 5-phosphate (DXP) to produce the thiazole phosphate moiety of thiamine. Sulfur is provided by the thiocarboxylate moiety of the carrier protein ThiS. In vitro, sulfur can be provided by H(2)S. This Rhodopseudomonas palustris (strain BisB5) protein is Thiazole synthase.